The sequence spans 1465 residues: MPEQERQITAREGASRKILSKLSLPTRAWEPAMKKSFAFDNVGYEGGLDGLGPSSQVATSTVRILGMTCQSCVKSIEDRISNLKGIISMKVSLEQGSATVKYVPSVVCLQQVCHQIGDMGFEASIAEGKAASWPSRSLPAQEAVVKLRVEGMTCQSCVSSIEGKVRKLQGVVRVKVSLSNQEAVITYQPYLIQPEDLRDHVNDMGFEAAIKSKVAPLSLGPIDIERLQSTNPKRPLSSANQNFNNSETLGHQGSHVVTLQLRIDGMHCKSCVLNIEENIGQLLGVQSIQVSLENKTAQVKYDPSCTSPVALQRAIEALPPGNFKVSLPDGAEGSGTDHRSSSSHSPGSPPRNQVQGTCSTTLIAIAGMTCASCVHSIEGMISQLEGVQQISVSLAEGTATVLYNPSVISPEELRAAIEDMGFEASVVSESCSTNPLGNHSAGNSMVQTTDGTPTSVQEVAPHTGRLPANHAPDILAKSPQSTRAVAPQKCFLQIKGMTCASCVSNIERNLQKEAGVLSVLVALMAGKAEIKYDPEVIQPLEIAQFIQDLGFEAAVMEDYAGSDGNIELTITGMTCASCVHNIESKLTRTNGITYASVALATSKALVKFDPEIIGPRDIIKIIEEIGFHASLAQRNPNAHHLDHKMEIKQWKKSFLCSLVFGIPVMALMIYMLIPSNEPHQSMVLDHNIIPGLSILNLIFFILCTFVQLLGGWYFYVQAYKSLRHRSANMDVLIVLATSIAYVYSLVILVVAVAEKAERSPVTFFDTPPMLFVFIALGRWLEHLAKSKTSEALAKLMSLQATEATVVTLGEDNLIIREEQVPMELVQRGDIVKVVPGGKFPVDGKVLEGNTMADESLITGEAMPVTKKPGSTVIAGSINAHGSVLIKATHVGNDTTLAQIVKLVEEAQMSKAPIQQLADRFSGYFVPFIIIMSTLTLVVWIVIGFIDFGVVQRYFPNPNKHISQTEVIIRFAFQTSITVLCIACPCSLGLATPTAVMVGTGVAAQNGILIKGGKPLEMAHKIKTVMFDKTGTITHGVPRVMRVLLLGDVATLPLRKVLAVVGTAEASSEHPLGVAVTKYCKEELGTETLGYCTDFQAVPGCGIGCKVSNVEGILAHSERPLSAPASHLNEAGSLPAEKDAVPQTFSVLIGNREWLRRNGLTISSDVSDAMTDHEMKGQTAILVAIDGVLCGMIAIADAVKQEAALAVHTLQSMGVDVVLITGDNRKTARAIATQVGINKVFAEVLPSHKVAKVQELQNKGKKVAMVGDGVNDSPALAQADMGVAIGTGTDVAIEAADVVLIRNDLLDVVASIHLSKRTVRRIRINLVLALIYNLVGIPIAAGVFMPIGIVLQPWMGSAAMAASSVSVVLSSLQLKCYKKPDLERYEAQAHGHMKPLTASQVSVHIGMDDRWRDSPRATPWDQVSYVSQVSLSSLTSDKPSRHSAAADDDGDKWSLLLNGRDEEQYI.

The Cytoplasmic portion of the chain corresponds to 1–653 (MPEQERQITA…KMEIKQWKKS (653 aa)). Ser-23 carries the phosphoserine modification. 2 HMA domains span residues 58-124 (ATST…FEAS) and 143-209 (AVVK…FEAA). Cu(+) is bound by residues Cys-69, Cys-72, Cys-154, and Cys-157. The interval 230–249 (TNPKRPLSSANQNFNNSETL) is disordered. HMA domains lie at 257 to 323 (VTLQ…PGNF) and 359 to 425 (STTL…FEAS). Residues Cys-268 and Cys-271 each coordinate Cu(+). The segment at 322–355 (NFKVSLPDGAEGSGTDHRSSSSHSPGSPPRNQVQ) is disordered. 2 residues coordinate Cu(+): Cys-370 and Cys-373. Residues Ser-478 and Ser-481 each carry the phosphoserine modification. HMA domains follow at residues 488–554 (QKCF…FEAA) and 564–630 (GNIE…FHAS). Cys-499, Cys-502, Cys-575, and Cys-578 together coordinate Cu(+). A helical membrane pass occupies residues 654 to 675 (FLCSLVFGIPVMALMIYMLIPS). Topologically, residues 676–697 (NEPHQSMVLDHNIIPGLSILNL) are extracellular. The helical transmembrane segment at 698 to 717 (IFFILCTFVQLLGGWYFYVQ) threads the bilayer. At 718 to 724 (AYKSLRH) the chain is on the cytoplasmic side. The chain crosses the membrane as a helical span at residues 725–745 (RSANMDVLIVLATSIAYVYSL). The Extracellular segment spans residues 746–764 (VILVVAVAEKAERSPVTFF). Residues 765–785 (DTPPMLFVFIALGRWLEHLAK) traverse the membrane as a helical segment. Over 786–919 (SKTSEALAKL…KAPIQQLADR (134 aa)) the chain is Cytoplasmic. The chain crosses the membrane as a helical span at residues 920 to 942 (FSGYFVPFIIIMSTLTLVVWIVI). At 943 to 972 (GFIDFGVVQRYFPNPNKHISQTEVIIRFAF) the chain is on the extracellular side. Residues 973–994 (QTSITVLCIACPCSLGLATPTA) form a helical membrane-spanning segment. Topologically, residues 995 to 1322 (VMVGTGVAAQ…LSKRTVRRIR (328 aa)) are cytoplasmic. Asp-1027 acts as the 4-aspartylphosphate intermediate in catalysis. Asp-1267 and Asp-1271 together coordinate Mg(2+). The chain crosses the membrane as a helical span at residues 1323-1340 (INLVLALIYNLVGIPIAA). At 1341-1351 (GVFMPIGIVLQ) the chain is on the extracellular side. A helical membrane pass occupies residues 1352–1371 (PWMGSAAMAASSVSVVLSSL). Residues 1372–1465 (QLKCYKKPDL…LNGRDEEQYI (94 aa)) are Cytoplasmic-facing. Ser-1398 is modified (phosphoserine).

The protein belongs to the cation transport ATPase (P-type) (TC 3.A.3) family. Type IB subfamily. In terms of assembly, monomer. Interacts with COMMD1/MURR1. Interacts with DCTN4, in a copper-dependent manner. Interacts with ATOX1. Interacts (via C-terminus) with ZBTB16/PLZF. Post-translationally, isoform 1 may be proteolytically cleaved at the N-terminus to produce the WND/140 kDa form. As to expression, most abundant in liver and kidney and also found in brain. Isoform 2 is expressed in brain but not in liver. The cleaved form WND/140 kDa is found in liver cell lines and other tissues.

The protein localises to the golgi apparatus. It is found in the trans-Golgi network membrane. The protein resides in the late endosome. It localises to the golgi apparatus membrane. Its subcellular location is the cytoplasm. The protein localises to the mitochondrion. It carries out the reaction Cu(+)(in) + ATP + H2O = Cu(+)(out) + ADP + phosphate + H(+). Copper ion transmembrane transporter involved in the export of copper out of the cells. It is involved in copper homeostasis in the liver, where it ensures the efflux of copper from hepatocytes into the bile in response to copper overload. The chain is Copper-transporting ATPase 2 (ATP7B) from Homo sapiens (Human).